We begin with the raw amino-acid sequence, 612 residues long: Proton channel OTOP1 (612 aa).

Positions Met1–Arg46 are enriched in low complexity. Positions Met1–Arg50 are disordered. At Met1–Ala58 the chain is on the cytoplasmic side. Residues Glu59–Trp80 form a helical membrane-spanning segment. Residues Ala81 to Ser88 are Extracellular-facing. Residues Lys89–Gly112 traverse the membrane as a helical segment. The Cytoplasmic segment spans residues Arg113–Ala130. The helical transmembrane segment at Gly131–Gly153 threads the bilayer. Topologically, residues Tyr154 to Ser163 are extracellular. A helical membrane pass occupies residues Ala164–Ala188. Topologically, residues Lys189 to Lys196 are cytoplasmic. The chain crosses the membrane as a helical span at residues Thr197–Lys223. At His224–Ser264 the chain is on the extracellular side. A helical membrane pass occupies residues His265–Lys290. The Cytoplasmic segment spans residues Asn291–Val311. Residues Met312–Ile334 traverse the membrane as a helical segment. Residues His335–Glu344 are Extracellular-facing. The chain crosses the membrane as a helical span at residues Ser345–Arg370. Residues Ile371 to Lys388 are Cytoplasmic-facing. Residues Leu389–Leu413 traverse the membrane as a helical segment. Over Cys414–Trp423 the chain is Extracellular. Residues Tyr424–Phe444 form a helical membrane-spanning segment. At Glu445–Arg544 the chain is on the cytoplasmic side. Residues Ala499–Pro525 form a disordered region. The span at Arg506–Glu518 shows a compositional bias: basic and acidic residues. Residues Asn545 to Phe563 traverse the membrane as a helical segment. Over Gly564–Glu581 the chain is Extracellular. Residues Pro582–Leu605 form a helical membrane-spanning segment. Topologically, residues Phe606–Ile612 are cytoplasmic.

It belongs to the otopetrin family. As to quaternary structure, homodimer. Interacts with STAT1, independently of STAT1 phosphorylation status.

It localises to the cell membrane. The protein localises to the cell projection. The protein resides in the microvillus. It carries out the reaction H(+)(in) = H(+)(out). With respect to regulation, activated by both acid and alkali, with proton influx in response to extracellular acid and proton efflux during alkali stimulation. Inhibited by Zn(2+); this inhibition is thought to be pH-sensitive. Currents evoked in response to mild acid (pH 6.0) stimulus may also be mildly potentiated by exposure to Zn(2+). Activated by NH(4)Cl. Its function is as follows. Proton-selective ion channel. Biphasically modulated by acid and alkali, mediating proton influx and efflux in response to extracellular acid and base stimulation, respectively. Sour taste receptor, which carries inward currents in response to extracellular acidification. Sensor for ammonium chloride (NH(4)Cl) in taste receptor cells. NH(4)Cl acts by increasing the intracellular pH, thereby generating a driving force for proton entry through OTOP1 channel. Might also participate in alkaline sensation. Plays a role in the regulation of Ca(2+) flux in response to purigenic (ATP, ADP and UDP) stimuli, leading to increase in cytosolic Ca(2+) due to influx of extracellular calcium. May play this role by inhibiting P2Y purinoceptor-mediated Ca(2+) release in a Ca(2+)-dependent manner and promote an influx of Ca(2+) in response to ATP. Through this mechanism and possibly others, plays a role in the formation and function of calcium carbonate-based structures in the vestibular system of the inner ear, called otoconia, that sense gravity and linear acceleration. In obesity, may attenuate adipose tissue inflammation, through the negative regulation of IFNG signaling, hence may play an adaptive role in the maintainance of metabolic homeostasis. Following alkali activation, may also be permeable Na(+), K(+), Cs(+) and Li(+). This chain is Proton channel OTOP1, found in Homo sapiens (Human).